A 232-amino-acid chain; its full sequence is Ribose-5-phosphate isomerase A (232 aa).

Substrate contacts are provided by residues 28 to 31 (TGST), 83 to 86 (DGAD), and 96 to 99 (KGGG). The active-site Proton acceptor is the E105. K123 contributes to the substrate binding site.

The protein belongs to the ribose 5-phosphate isomerase family. Homodimer.

It catalyses the reaction aldehydo-D-ribose 5-phosphate = D-ribulose 5-phosphate. Its pathway is carbohydrate degradation; pentose phosphate pathway; D-ribose 5-phosphate from D-ribulose 5-phosphate (non-oxidative stage): step 1/1. In terms of biological role, catalyzes the reversible conversion of ribose-5-phosphate to ribulose 5-phosphate. The polypeptide is Ribose-5-phosphate isomerase A (Rhodopseudomonas palustris (strain BisB5)).